A 277-amino-acid polypeptide reads, in one-letter code: MAAVSVFQPPVGGFSFDNCRRNAVLEADFAKKGFKLPKARKTGTTIAGVVYKDGIVLGADTRATEGMVVADKNCSKIHFISPNIYCCGAGTAADTDMTTQLISSNLELHSLTTGRLPRVVTANRMLKQMLFRYQGYIGAALVLGGVDVTGPHLYSIYPHGSTDKLPYVTMGSGSLAAMAVFEDKFRPDMEEEEAKKLVSEAIAAGIFNDLGSGSNIDLCVISKSKLDFLRPFSVPNKKGTRLGRYRCEKGTTAVLTEKVTPLEIEVLEETVQTMDTS.

A propeptide spans 1–43 (MAAVSVFQPPVGGFSFDNCRRNAVLEADFAKKGFKLPKARKTG) (removed in mature form). Catalysis depends on Thr44, which acts as the Nucleophile.

It belongs to the peptidase T1B family. In terms of assembly, the 26S proteasome consists of a 20S proteasome core and two 19S regulatory subunits. The 20S proteasome core is a barrel-shaped complex made of 28 subunits that are arranged in four stacked rings. The two outer rings are each formed by seven alpha subunits, and the two inner rings are formed by seven beta subunits. The proteolytic activity is exerted by three beta-subunits PSMB5, PSMB6 and PSMB7.

The protein localises to the cytoplasm. The protein resides in the nucleus. The enzyme catalyses Cleavage of peptide bonds with very broad specificity.. In terms of biological role, component of the 20S core proteasome complex involved in the proteolytic degradation of most intracellular proteins. This complex plays numerous essential roles within the cell by associating with different regulatory particles. Associated with two 19S regulatory particles, forms the 26S proteasome and thus participates in the ATP-dependent degradation of ubiquitinated proteins. The 26S proteasome plays a key role in the maintenance of protein homeostasis by removing misfolded or damaged proteins that could impair cellular functions, and by removing proteins whose functions are no longer required. Associated with the PA200 or PA28, the 20S proteasome mediates ubiquitin-independent protein degradation. This type of proteolysis is required in several pathways including spermatogenesis (20S-PA200 complex) or generation of a subset of MHC class I-presented antigenic peptides (20S-PA28 complex). Within the 20S core complex, PSMB7 displays a trypsin-like activity. In Mus musculus (Mouse), this protein is Proteasome subunit beta type-7 (Psmb7).